The chain runs to 331 residues: Ketol-acid reductoisomerase (NADP(+)) (331 aa).

A KARI N-terminal Rossmann domain is found at 2-182; the sequence is AKLFYDSDAD…GGTRAGILET (181 aa). NADP(+)-binding positions include 25–28, S51, S53, and 83–86; these read YGSQ and DEFQ. H108 is an active-site residue. G134 contributes to the NADP(+) binding site. The KARI C-terminal knotted domain maps to 183–328; it reads NFKEETETDL…KTLRSMFSWL (146 aa). D191, E195, E227, and E231 together coordinate Mg(2+). S252 lines the substrate pocket.

It belongs to the ketol-acid reductoisomerase family. The cofactor is Mg(2+).

The enzyme catalyses (2R)-2,3-dihydroxy-3-methylbutanoate + NADP(+) = (2S)-2-acetolactate + NADPH + H(+). The catalysed reaction is (2R,3R)-2,3-dihydroxy-3-methylpentanoate + NADP(+) = (S)-2-ethyl-2-hydroxy-3-oxobutanoate + NADPH + H(+). It participates in amino-acid biosynthesis; L-isoleucine biosynthesis; L-isoleucine from 2-oxobutanoate: step 2/4. Its pathway is amino-acid biosynthesis; L-valine biosynthesis; L-valine from pyruvate: step 2/4. In terms of biological role, involved in the biosynthesis of branched-chain amino acids (BCAA). Catalyzes an alkyl-migration followed by a ketol-acid reduction of (S)-2-acetolactate (S2AL) to yield (R)-2,3-dihydroxy-isovalerate. In the isomerase reaction, S2AL is rearranged via a Mg-dependent methyl migration to produce 3-hydroxy-3-methyl-2-ketobutyrate (HMKB). In the reductase reaction, this 2-ketoacid undergoes a metal-dependent reduction by NADPH to yield (R)-2,3-dihydroxy-isovalerate. This is Ketol-acid reductoisomerase (NADP(+)) from Prochlorococcus marinus (strain NATL2A).